Here is a 30-residue protein sequence, read N- to C-terminus: Ribosome-inactivating protein momorcochin-S (30 aa).

This sequence belongs to the ribosome-inactivating protein family. Type 1 RIP subfamily. Post-translationally, glycosylated.

It catalyses the reaction Endohydrolysis of the N-glycosidic bond at one specific adenosine on the 28S rRNA.. In terms of biological role, inactivates eukaryotic 60S ribosomal subunits. The sequence is that of Ribosome-inactivating protein momorcochin-S from Momordica cochinchinensis (Spiny bitter cucumber).